A 199-amino-acid chain; its full sequence is Fe/S biogenesis protein NfuA (199 aa).

Cys-151 and Cys-154 together coordinate [4Fe-4S] cluster.

This sequence belongs to the NfuA family. Homodimer. Requires [4Fe-4S] cluster as cofactor.

Functionally, involved in iron-sulfur cluster biogenesis. Binds a 4Fe-4S cluster, can transfer this cluster to apoproteins, and thereby intervenes in the maturation of Fe/S proteins. Could also act as a scaffold/chaperone for damaged Fe/S proteins. In Xylella fastidiosa (strain M12), this protein is Fe/S biogenesis protein NfuA.